Reading from the N-terminus, the 526-residue chain is Germ cell-less protein-like 2 (526 aa).

Residues 1–85 are disordered; sequence MGSSSSRVLG…DKQQPLLNTP (85 aa). A Nuclear localization signal motif is present at residues 49-55; that stretch reads SHKRKRS. A compositionally biased stretch (basic and acidic residues) spans 62 to 77; that stretch reads CDPDSHREEHEEEGDK. Residues 85 to 91 carry the Nuclear localization signal motif; sequence PARKKLR. In terms of domain architecture, BTB spans 108 to 178; that stretch reads SDIKICALGE…LYRDDVLIKP (71 aa).

Interacts with CUL3. Expressed predominantly in testis.

Its subcellular location is the nucleus matrix. It participates in protein modification; protein ubiquitination. Its function is as follows. Possible function in spermatogenesis. Probable substrate-specific adapter of an E3 ubiquitin-protein ligase complex which mediates the ubiquitination and subsequent proteasomal degradation of target proteins. In Homo sapiens (Human), this protein is Germ cell-less protein-like 2.